Reading from the N-terminus, the 84-residue chain is ATP synthase subunit c (84 aa).

2 helical membrane passes run 9 to 29 (IIGA…GFAI) and 54 to 74 (IVAG…LLFI).

It belongs to the ATPase C chain family. As to quaternary structure, F-type ATPases have 2 components, F(1) - the catalytic core - and F(0) - the membrane proton channel. F(1) has five subunits: alpha(3), beta(3), gamma(1), delta(1), epsilon(1). F(0) has three main subunits: a(1), b(2) and c(10-14). The alpha and beta chains form an alternating ring which encloses part of the gamma chain. F(1) is attached to F(0) by a central stalk formed by the gamma and epsilon chains, while a peripheral stalk is formed by the delta and b chains.

Its subcellular location is the cell inner membrane. F(1)F(0) ATP synthase produces ATP from ADP in the presence of a proton or sodium gradient. F-type ATPases consist of two structural domains, F(1) containing the extramembraneous catalytic core and F(0) containing the membrane proton channel, linked together by a central stalk and a peripheral stalk. During catalysis, ATP synthesis in the catalytic domain of F(1) is coupled via a rotary mechanism of the central stalk subunits to proton translocation. Functionally, key component of the F(0) channel; it plays a direct role in translocation across the membrane. A homomeric c-ring of between 10-14 subunits forms the central stalk rotor element with the F(1) delta and epsilon subunits. In Haemophilus ducreyi (strain 35000HP / ATCC 700724), this protein is ATP synthase subunit c.